A 275-amino-acid polypeptide reads, in one-letter code: Hydroxyethylthiazole kinase (275 aa).

Met53 serves as a coordination point for substrate. Positions 128 and 174 each coordinate ATP. Gly201 contacts substrate.

This sequence belongs to the Thz kinase family. Mg(2+) serves as cofactor.

It catalyses the reaction 5-(2-hydroxyethyl)-4-methylthiazole + ATP = 4-methyl-5-(2-phosphooxyethyl)-thiazole + ADP + H(+). It functions in the pathway cofactor biosynthesis; thiamine diphosphate biosynthesis; 4-methyl-5-(2-phosphoethyl)-thiazole from 5-(2-hydroxyethyl)-4-methylthiazole: step 1/1. In terms of biological role, catalyzes the phosphorylation of the hydroxyl group of 4-methyl-5-beta-hydroxyethylthiazole (THZ). This chain is Hydroxyethylthiazole kinase, found in Kineococcus radiotolerans (strain ATCC BAA-149 / DSM 14245 / SRS30216).